Reading from the N-terminus, the 354-residue chain is mRNA cap guanine-N(7) methyltransferase 2 (354 aa).

Residues 8–286 (KPEQSHHRLF…LYATFIFQKP (279 aa)) form the mRNA cap 0 methyltransferase domain. S-adenosyl-L-methionine contacts are provided by residues lysine 21, aspartate 61, and 88-89 (DP).

Belongs to the class I-like SAM-binding methyltransferase superfamily. mRNA cap 0 methyltransferase family.

It is found in the nucleus. It catalyses the reaction a 5'-end (5'-triphosphoguanosine)-ribonucleoside in mRNA + S-adenosyl-L-methionine = a 5'-end (N(7)-methyl 5'-triphosphoguanosine)-ribonucleoside in mRNA + S-adenosyl-L-homocysteine. Its function is as follows. mRNA capping methyltransferase that methylates the N7 position of the added guanosine to the 5'-cap structure of mRNAs. Binds RNA containing 5'-terminal GpppC. The polypeptide is mRNA cap guanine-N(7) methyltransferase 2 (Arabidopsis thaliana (Mouse-ear cress)).